A 121-amino-acid chain; its full sequence is Large ribosomal subunit protein uL14 (121 aa).

This sequence belongs to the universal ribosomal protein uL14 family. Part of the 50S ribosomal subunit. Forms a cluster with proteins L3 and L19. In the 70S ribosome, L14 and L19 interact and together make contacts with the 16S rRNA in bridges B5 and B8.

Its function is as follows. Binds to 23S rRNA. Forms part of two intersubunit bridges in the 70S ribosome. This is Large ribosomal subunit protein uL14 from Hydrogenobaculum sp. (strain Y04AAS1).